A 514-amino-acid polypeptide reads, in one-letter code: Na(+)/H(+) antiporter NhaB (514 aa).

Transmembrane regions (helical) follow at residues 23–43 (LALL…PFIA), 63–83 (PLLP…TSAA), 97–117 (LLLM…LFIF), 120–140 (LLLS…AAAF), 144–164 (FLDA…FYGI), 202–222 (LMMH…VGEP), 238–258 (FFLR…LTCM), 303–323 (AVIG…VGLI), 357–377 (LTVF…APII), 391–411 (LFYL…VGTI), 447–467 (ATPN…APLI), and 475–495 (VWMA…CVEF).

Belongs to the NhaB Na(+)/H(+) (TC 2.A.34) antiporter family.

Its subcellular location is the cell inner membrane. It carries out the reaction 2 Na(+)(in) + 3 H(+)(out) = 2 Na(+)(out) + 3 H(+)(in). Its function is as follows. Na(+)/H(+) antiporter that extrudes sodium in exchange for external protons. The sequence is that of Na(+)/H(+) antiporter NhaB from Salmonella choleraesuis (strain SC-B67).